The chain runs to 277 residues: Myelin proteolipid protein (277 aa).

Residues 1–10 are Cytoplasmic-facing; it reads MGLLECCARC. S-palmitoyl cysteine attachment occurs at residues cysteine 6, cysteine 7, and cysteine 10. A helical transmembrane segment spans residues 11-36; the sequence is LVGAPFASLVATGLCFFGVALFCGCG. Over 37–59 the chain is Extracellular; sequence HEALTGTEKLIETYFSKNYQDYE. Residues 60–88 traverse the membrane as a helical segment; the sequence is YLINVIHAFQYVIYGTASFFFLYGALLLA. Residues 89–151 lie on the Cytoplasmic side of the membrane; it reads EGFYTTGAVR…LGKWLGHPDK (63 aa). Cysteine 109 carries S-palmitoyl cysteine lipidation. A Phosphoserine modification is found at serine 114. Phosphothreonine occurs at positions 116 and 118. Cysteine 141 carries the S-palmitoyl cysteine lipid modification. The helical transmembrane segment at 152 to 178 threads the bilayer; that stretch reads FVGITYALTVVWLLVFACSAVPVYIYF. Residues 179–238 lie on the Extracellular side of the membrane; sequence NTWTTCQSIAFPSKTSASIGSLCADARMYGVLPWNAFPGKVCGSNLLSICKTAEFQMTFH. 2 disulfide bridges follow: cysteine 184–cysteine 228 and cysteine 201–cysteine 220. Serine 199 carries O-palmitoyl serine lipidation. Residues 239 to 268 traverse the membrane as a helical segment; the sequence is LFIAAFVGAAATLISLLTFMIAATYNFAVL. At 269–277 the chain is on the cytoplasmic side; it reads KLMGRGTKF.

It belongs to the myelin proteolipid protein family.

Its subcellular location is the cell membrane. It is found in the myelin membrane. Functionally, this is the major myelin protein from the central nervous system. It plays an important role in the formation or maintenance of the multilamellar structure of myelin. The sequence is that of Myelin proteolipid protein (PLP1) from Macaca fascicularis (Crab-eating macaque).